Here is a 517-residue protein sequence, read N- to C-terminus: Amidophosphoribosyltransferase (517 aa).

Met1 carries the N-acetylmethionine modification. A propeptide spanning residues 1 to 11 is cleaved from the precursor; sequence MELEELGIREE. The active-site Nucleophile is the Cys12. Residues 12-261 form the Glutamine amidotransferase type-2 domain; it reads CGVFGCIASG…PGEIVEISRH (250 aa). Cys280 contributes to the [4Fe-4S] cluster binding site. Mg(2+) contacts are provided by Ser327, Asp389, and Asp390. Positions 426, 503, and 506 each coordinate [4Fe-4S] cluster.

In the C-terminal section; belongs to the purine/pyrimidine phosphoribosyltransferase family. As to quaternary structure, homotetramer. The cofactor is Mg(2+). Requires [4Fe-4S] cluster as cofactor.

It catalyses the reaction 5-phospho-beta-D-ribosylamine + L-glutamate + diphosphate = 5-phospho-alpha-D-ribose 1-diphosphate + L-glutamine + H2O. The protein operates within purine metabolism; IMP biosynthesis via de novo pathway; N(1)-(5-phospho-D-ribosyl)glycinamide from 5-phospho-alpha-D-ribose 1-diphosphate: step 1/2. Its function is as follows. Catalyzes the formation of phosphoribosylamine from phosphoribosylpyrophosphate (PRPP) and glutamine. The sequence is that of Amidophosphoribosyltransferase from Mus musculus (Mouse).